Reading from the N-terminus, the 613-residue chain is Dihydroxy-acid dehydratase (613 aa).

Asp81 serves as a coordination point for Mg(2+). A [2Fe-2S] cluster-binding site is contributed by Cys122. The Mg(2+) site is built by Asp123 and Lys124. Lys124 carries the N6-carboxylysine modification. Cys193 contributes to the [2Fe-2S] cluster binding site. Glu489 is a binding site for Mg(2+). The active-site Proton acceptor is Ser515.

Belongs to the IlvD/Edd family. Homodimer. The cofactor is [2Fe-2S] cluster. Requires Mg(2+) as cofactor.

The catalysed reaction is (2R)-2,3-dihydroxy-3-methylbutanoate = 3-methyl-2-oxobutanoate + H2O. It carries out the reaction (2R,3R)-2,3-dihydroxy-3-methylpentanoate = (S)-3-methyl-2-oxopentanoate + H2O. It participates in amino-acid biosynthesis; L-isoleucine biosynthesis; L-isoleucine from 2-oxobutanoate: step 3/4. It functions in the pathway amino-acid biosynthesis; L-valine biosynthesis; L-valine from pyruvate: step 3/4. Functions in the biosynthesis of branched-chain amino acids. Catalyzes the dehydration of (2R,3R)-2,3-dihydroxy-3-methylpentanoate (2,3-dihydroxy-3-methylvalerate) into 2-oxo-3-methylpentanoate (2-oxo-3-methylvalerate) and of (2R)-2,3-dihydroxy-3-methylbutanoate (2,3-dihydroxyisovalerate) into 2-oxo-3-methylbutanoate (2-oxoisovalerate), the penultimate precursor to L-isoleucine and L-valine, respectively. This is Dihydroxy-acid dehydratase from Pseudomonas fluorescens (strain ATCC BAA-477 / NRRL B-23932 / Pf-5).